A 40-amino-acid chain; its full sequence is Entry-fusion complex protein OPG076 (40 aa).

A helical membrane pass occupies residues 2-22 (LVVIMFFIAFAFCSWLSYSYL). The Virion surface portion of the chain corresponds to 23–40 (RPYISTKELNKSRMFYIT).

This sequence belongs to the orthopoxvirus OPG076 family. As to quaternary structure, component of the entry fusion complex (EFC) composed of OPG053, OPG076, OPG086, OPG094, OPG095, OPG099, OPG107, OPG143, OPG104, OPG147 and OPG155. Except for OPG095 and OPG053, each of the EFC proteins is required for assembly or stability of the complex. Post-translationally, unglycosylated because produced in viral factories instead of the classic ER -Golgi route.

It localises to the virion membrane. In terms of biological role, component of the entry fusion complex (EFC), which consists of 11 proteins. During cell infection, this complex mediates entry of the virion core into the host cytoplasm by a two-step mechanism consisting of lipid mixing of the viral and cellular membranes and subsequent pore formation. The sequence is that of Entry-fusion complex protein OPG076 (OPG076) from Variola virus (isolate Human/India/Ind3/1967) (VARV).